We begin with the raw amino-acid sequence, 67 residues long: ATP synthase F(0) complex subunit 8 (67 aa).

A helical transmembrane segment spans residues 8 to 24 (TWFIMIFSMFLTLFILF). The residue at position 54 (K54) is an N6-acetyllysine; alternate. K54 is modified (N6-succinyllysine; alternate). The residue at position 57 (K57) is an N6-acetyllysine.

The protein belongs to the ATPase protein 8 family. As to quaternary structure, component of the ATP synthase complex composed at least of ATP5F1A/subunit alpha, ATP5F1B/subunit beta, ATP5MC1/subunit c (homooctomer), MT-ATP6/subunit a, MT-ATP8/subunit 8, ATP5ME/subunit e, ATP5MF/subunit f, ATP5MG/subunit g, ATP5MK/subunit k, ATP5MJ/subunit j, ATP5F1C/subunit gamma, ATP5F1D/subunit delta, ATP5F1E/subunit epsilon, ATP5PF/subunit F6, ATP5PB/subunit b, ATP5PD/subunit d, ATP5PO/subunit OSCP. ATP synthase complex consists of a soluble F(1) head domain (subunits alpha(3) and beta(3)) - the catalytic core - and a membrane F(0) domain - the membrane proton channel (subunits c, a, 8, e, f, g, k and j). These two domains are linked by a central stalk (subunits gamma, delta, and epsilon) rotating inside the F1 region and a stationary peripheral stalk (subunits F6, b, d, and OSCP). Interacts with PRICKLE3.

It is found in the mitochondrion membrane. Functionally, subunit 8, of the mitochondrial membrane ATP synthase complex (F(1)F(0) ATP synthase or Complex V) that produces ATP from ADP in the presence of a proton gradient across the membrane which is generated by electron transport complexes of the respiratory chain. ATP synthase complex consist of a soluble F(1) head domain - the catalytic core - and a membrane F(1) domain - the membrane proton channel. These two domains are linked by a central stalk rotating inside the F(1) region and a stationary peripheral stalk. During catalysis, ATP synthesis in the catalytic domain of F(1) is coupled via a rotary mechanism of the central stalk subunits to proton translocation. In vivo, can only synthesize ATP although its ATP hydrolase activity can be activated artificially in vitro. Part of the complex F(0) domain. The protein is ATP synthase F(0) complex subunit 8 of Canis lupus familiaris (Dog).